We begin with the raw amino-acid sequence, 432 residues long: MAESSKVVHVRNVGHEISENDLLQLFQPFGVITKLVMLRAKNQALLQMQDVSSAVSALQFFTNVQPTIRGRNVYVQFSSHQELTTIEQNIHGREDEPNRILLVTIHHMLYPITVDVLHQVFSPYGFVEKLVTFQKSAGFQALIQYQVQQCAASARTALQGRNIYDGCCQLDIQFSNLEELQVNYNNDRSRDYTNPNLPAEQKGRSSHPCYGDTGVAYPQMANTSAIAAAFGGGLPPGITGTNDRCTVLVSNLNADSIDEDKLFNLFSLYGNIVRIKLLRNKPDHALVQMGDGFQAELAVHFLKGAMLFGKRLEVNFSKHPNITPGTDSHDYVNSNLNRFNRNAAKNYRYCCSPTKMIHLSTLPQDVTEEEVMNHVQEHGAVVNTKVFEMNGKKQALVQFENEEEAAEALVCKHATSLGGSIIRISFSQLQTI.

RRM domains follow at residues 6-80, 98-187, 245-319, and 355-429; these read KVVH…FSSH, NRIL…YNND, CTVL…FSKH, and KMIH…FSQL.

The protein localises to the nucleus. In terms of biological role, plays a role in pre-mRNA splicing. Binds to the polypyrimidine tract of introns. May promote the binding of U2 snRNP to pre-mRNA. This Arabidopsis thaliana (Mouse-ear cress) protein is Polypyrimidine tract-binding protein homolog 3.